The chain runs to 373 residues: DNA replication and repair protein RecF (373 aa).

30–37 (GANGSGKT) is an ATP binding site.

This sequence belongs to the RecF family.

The protein resides in the cytoplasm. In terms of biological role, the RecF protein is involved in DNA metabolism; it is required for DNA replication and normal SOS inducibility. RecF binds preferentially to single-stranded, linear DNA. It also seems to bind ATP. This is DNA replication and repair protein RecF from Marinobacter nauticus (strain ATCC 700491 / DSM 11845 / VT8) (Marinobacter aquaeolei).